The sequence spans 364 residues: tRNA 2-selenouridine synthase (364 aa).

The Rhodanese domain occupies 15-138; sequence FVNDTPLMDM…LRRFLIETID (124 aa). The active-site S-selanylcysteine intermediate is C98.

The protein belongs to the SelU family. As to quaternary structure, monomer.

It catalyses the reaction 5-methylaminomethyl-2-thiouridine(34) in tRNA + selenophosphate + (2E)-geranyl diphosphate + H2O + H(+) = 5-methylaminomethyl-2-selenouridine(34) in tRNA + (2E)-thiogeraniol + phosphate + diphosphate. The catalysed reaction is 5-methylaminomethyl-2-thiouridine(34) in tRNA + (2E)-geranyl diphosphate = 5-methylaminomethyl-S-(2E)-geranyl-thiouridine(34) in tRNA + diphosphate. The enzyme catalyses 5-methylaminomethyl-S-(2E)-geranyl-thiouridine(34) in tRNA + selenophosphate + H(+) = 5-methylaminomethyl-2-(Se-phospho)selenouridine(34) in tRNA + (2E)-thiogeraniol. It carries out the reaction 5-methylaminomethyl-2-(Se-phospho)selenouridine(34) in tRNA + H2O = 5-methylaminomethyl-2-selenouridine(34) in tRNA + phosphate. In terms of biological role, involved in the post-transcriptional modification of the uridine at the wobble position (U34) of tRNA(Lys), tRNA(Glu) and tRNA(Gln). Catalyzes the conversion of 2-thiouridine (S2U-RNA) to 2-selenouridine (Se2U-RNA). Acts in a two-step process involving geranylation of 2-thiouridine (S2U) to S-geranyl-2-thiouridine (geS2U) and subsequent selenation of the latter derivative to 2-selenouridine (Se2U) in the tRNA chain. This is tRNA 2-selenouridine synthase from Photobacterium profundum (strain SS9).